The sequence spans 751 residues: MNNNIAISKENTIKLSFPLVFDTKTTNTSTKEYVETIKEDEKVDLFDPTIDTKLFVKPDRKTKKNDKSDQRDSDIDIIKTKLKSKKKEKSKFRKDEDYDSLKREDNQSPQGAMSSLPFARPEVPAKKMVSNTNTLNKKNVVKSSTKKSKKQTSAKNRELEQNLLVKPENVVIAGPLSVQELAVLLTVSETEIIRSLFLKGIGVTINQILDVSTAKTVGEDLGINIDHVKDSDEESKKLQIHEIDNESLEKRPPVIAIMGHVDHGKTTLLDKIRKTQIAQKEAGGITQKIGAYEVEIDYKDQTKKLTFLDTPGHEAFSGMRSRGVQVTDIAILVVAADDGVKPQTVEAIKYIQAANVPIIVAINKIDKENADIENIKQQLTQYNLIPENWGGDTLMVPISAMKGTNMENLLEMIILVSEIEDLKANTKVKAQGTVLEAHLDRTKGAVATLLVQNGTLRIGDILTAGTSMAKIRGMINSLGEKIEECLPSSPVLIWGLSKLPASGEHFEIFDDEKQAKIAVQKAQEANKENQTIANTISENYTLSNSNTKGVINLIIKTDIQGSAEAIIGSINKIPQDKVQVRVLYASAGEITETDIDFADTSGAIVLAFNTSLATGASKAARHLNVKVKEYDVIYDLLDYIELTIEEITGPEYDKKSLGKAIVQGVFPLAKSFVAGLRVTEGKITKNAHIEVIRQDLVVFDGSITSLKKVKEDIGEAIEDSECGLFVEEFDTWQENDIVQAFELIPKKRKEK.

The tract at residues 86–156 is disordered; it reads KKEKSKFRKD…KSKKQTSAKN (71 aa). The segment covering 93-106 has biased composition (basic and acidic residues); sequence RKDEDYDSLKREDN. A compositionally biased stretch (low complexity) spans 129 to 143; that stretch reads VSNTNTLNKKNVVKS. Residues 250–423 form the tr-type G domain; it reads KRPPVIAIMG…ILVSEIEDLK (174 aa). Residues 259–266 are G1; sequence GHVDHGKT. 259 to 266 is a binding site for GTP; that stretch reads GHVDHGKT. The interval 284–288 is G2; sequence GITQK. A G3 region spans residues 309–312; the sequence is DTPG. GTP contacts are provided by residues 309 to 313 and 363 to 366; these read DTPGH and NKID. Residues 363-366 form a G4 region; it reads NKID. A G5 region spans residues 399–401; sequence SAM.

The protein belongs to the TRAFAC class translation factor GTPase superfamily. Classic translation factor GTPase family. IF-2 subfamily.

The protein localises to the plastid. The protein resides in the chloroplast. In terms of biological role, one of the essential components for the initiation of protein synthesis. Protects formylmethionyl-tRNA from spontaneous hydrolysis and promotes its binding to the 30S ribosomal subunits. Also involved in the hydrolysis of GTP during the formation of the 70S ribosomal complex. The chain is Translation initiation factor IF-2, chloroplastic (infB) from Rhodomonas salina (Cryptomonas salina).